Consider the following 393-residue polypeptide: G protein-activated inward rectifier potassium channel 3 (393 aa).

The segment at 1 to 23 is disordered; it reads MAQENAAFSPGQEEPPRRRGRQR. Residues 1–57 are Cytoplasmic-facing; it reads MAQENAAFSPGQEEPPRRRGRQRYVEKDGRCNVQQGNVRETYRYLTDLFTTLVDLQW. A helical membrane pass occupies residues 58-82; it reads RLSLLFFVLAYALTWLFFGAIWWLI. The Extracellular segment spans residues 83–106; the sequence is AYGRGDLEHLEDTAWTPCVNNLNG. The segment at residues 107–118 is an intramembrane region (helical; Pore-forming); sequence FVAAFLFSIETE. Positions 119-125 form an intramembrane region, pore-forming; it reads TTIGYGH. The Selectivity filter motif lies at 120 to 125; sequence TIGYGH. The Extracellular segment spans residues 126–134; sequence RVITDQCPE. Residues 135 to 156 traverse the membrane as a helical segment; it reads GIVLLLLQAILGSMVNAFMVGC. Residues 157 to 393 lie on the Cytoplasmic side of the membrane; it reads MFVKISQPNK…LPPPESESKV (237 aa). Residues 360–393 form a disordered region; that stretch reads KVEEEGAGEGAGGEAGADKEQNGCLPPPESESKV. The segment covering 384–393 has biased composition (pro residues); it reads LPPPESESKV. The short motif at 390–393 is the PDZ-binding element; it reads ESKV.

This sequence belongs to the inward rectifier-type potassium channel (TC 1.A.2.1) family. KCNJ9 subfamily. In terms of assembly, associates with KCNJ3/GIRK1 to form a G-protein-activated heteromultimer pore-forming unit. Interacts (via PDZ-binding motif) with SNX27 (via PDZ domain); the interaction is required when endocytosed to prevent degradation in lysosomes and promote recycling to the plasma membrane.

It is found in the membrane. It carries out the reaction K(+)(in) = K(+)(out). In terms of biological role, inward rectifier potassium channels are characterized by a greater tendency to allow potassium to flow into the cell rather than out of it. Their voltage dependence is regulated by the concentration of extracellular potassium; as external potassium is raised, the voltage range of the channel opening shifts to more positive voltages. The inward rectification is mainly due to the blockage of outward current by internal magnesium, This receptor is controlled by G proteins. Unable to produce channel activity when expressed alone. Forms a functional channel in association with KCNJ3/GIRK1. In Homo sapiens (Human), this protein is G protein-activated inward rectifier potassium channel 3 (KCNJ9).